The sequence spans 149 residues: D-aminoacyl-tRNA deacylase (149 aa).

A Gly-cisPro motif, important for rejection of L-amino acids motif is present at residues 141–142 (GP).

It belongs to the DTD family. As to quaternary structure, homodimer.

The protein resides in the cytoplasm. It catalyses the reaction glycyl-tRNA(Ala) + H2O = tRNA(Ala) + glycine + H(+). It carries out the reaction a D-aminoacyl-tRNA + H2O = a tRNA + a D-alpha-amino acid + H(+). Functionally, an aminoacyl-tRNA editing enzyme that deacylates mischarged D-aminoacyl-tRNAs. Also deacylates mischarged glycyl-tRNA(Ala), protecting cells against glycine mischarging by AlaRS. Acts via tRNA-based rather than protein-based catalysis; rejects L-amino acids rather than detecting D-amino acids in the active site. By recycling D-aminoacyl-tRNA to D-amino acids and free tRNA molecules, this enzyme counteracts the toxicity associated with the formation of D-aminoacyl-tRNA entities in vivo and helps enforce protein L-homochirality. In Hydrogenovibrio crunogenus (strain DSM 25203 / XCL-2) (Thiomicrospira crunogena), this protein is D-aminoacyl-tRNA deacylase.